The sequence spans 421 residues: Stemmadenine O-acetyltransferase (421 aa).

A disordered region spans residues 1–21 (MAPQMQILSEELIQPSSPTPQ). Catalysis depends on proton acceptor residues His160 and Asp362.

Belongs to the plant acyltransferase family. As to quaternary structure, monomer. Expressed in leaf epidermis.

It carries out the reaction 15alpha-stemmadenine + acetyl-CoA = O-acetyl-15alpha-stemmadenine + CoA. It functions in the pathway alkaloid biosynthesis. Functionally, component of iboga and aspidosperma monoterpenoid indole alkaloids (MIAs, e.g. tabersonine and catharanthine) biosynthesis pathway from 19E-geissoschizine. Acetyltransferase that catalyzes the formation of O-acetylstemmadenine from stemmadenine. In Catharanthus roseus (Madagascar periwinkle), this protein is Stemmadenine O-acetyltransferase.